Reading from the N-terminus, the 115-residue chain is Large ribosomal subunit protein uL22 (115 aa).

Belongs to the universal ribosomal protein uL22 family. Part of the 50S ribosomal subunit.

Its function is as follows. This protein binds specifically to 23S rRNA; its binding is stimulated by other ribosomal proteins, e.g. L4, L17, and L20. It is important during the early stages of 50S assembly. It makes multiple contacts with different domains of the 23S rRNA in the assembled 50S subunit and ribosome. The globular domain of the protein is located near the polypeptide exit tunnel on the outside of the subunit, while an extended beta-hairpin is found that lines the wall of the exit tunnel in the center of the 70S ribosome. This is Large ribosomal subunit protein uL22 from Enterococcus faecalis (strain ATCC 700802 / V583).